A 507-amino-acid chain; its full sequence is Chromosomal replication initiator protein DnaA (507 aa).

The interval Met1–Glu72 is domain I, interacts with DnaA modulators. The domain II stretch occupies residues Glu72–Gly162. The interval Asn163 to Ala384 is domain III, AAA+ region. Gly207, Gly209, Lys210, and Thr211 together coordinate ATP. The segment at Gln385 to Ser507 is domain IV, binds dsDNA.

This sequence belongs to the DnaA family. As to quaternary structure, oligomerizes as a right-handed, spiral filament on DNA at oriC.

It localises to the cytoplasm. Plays an essential role in the initiation and regulation of chromosomal replication. ATP-DnaA binds to the origin of replication (oriC) to initiate formation of the DNA replication initiation complex once per cell cycle. Binds the DnaA box (a 9 base pair repeat at the origin) and separates the double-stranded (ds)DNA. Forms a right-handed helical filament on oriC DNA; dsDNA binds to the exterior of the filament while single-stranded (ss)DNA is stabiized in the filament's interior. The ATP-DnaA-oriC complex binds and stabilizes one strand of the AT-rich DNA unwinding element (DUE), permitting loading of DNA polymerase. After initiation quickly degrades to an ADP-DnaA complex that is not apt for DNA replication. Binds acidic phospholipids. The chain is Chromosomal replication initiator protein DnaA from Onion yellows phytoplasma (strain OY-M).